The primary structure comprises 251 residues: DNA repair protein RecO (251 aa).

Belongs to the RecO family.

Its function is as follows. Involved in DNA repair and RecF pathway recombination. The protein is DNA repair protein RecO of Acidiphilium cryptum (strain JF-5).